The primary structure comprises 130 residues: MTRIRRGYIARRRRTKTRFFASSWRGARGNLTRAIIQQRIRAWFSSHRDRTRQKRDFRRLWITRINAAIRENGRSSIYSKLIHNLYKRQLFLNRKMLAQLAILNRNCLYMISNQILKEVDWQESATILEI.

The protein belongs to the bacterial ribosomal protein bL20 family.

The protein resides in the plastid. It is found in the chloroplast. Functionally, binds directly to 23S ribosomal RNA and is necessary for the in vitro assembly process of the 50S ribosomal subunit. It is not involved in the protein synthesizing functions of that subunit. In Oenothera argillicola (Appalachian evening primrose), this protein is Large ribosomal subunit protein bL20c.